We begin with the raw amino-acid sequence, 366 residues long: Chorismate synthase (366 aa).

R48 serves as a coordination point for NADP(+). FMN contacts are provided by residues 125 to 127 (RSS), 238 to 239 (NA), G278, 293 to 297 (KPTSS), and R319.

This sequence belongs to the chorismate synthase family. Homotetramer. FMNH2 is required as a cofactor.

The enzyme catalyses 5-O-(1-carboxyvinyl)-3-phosphoshikimate = chorismate + phosphate. Its pathway is metabolic intermediate biosynthesis; chorismate biosynthesis; chorismate from D-erythrose 4-phosphate and phosphoenolpyruvate: step 7/7. In terms of biological role, catalyzes the anti-1,4-elimination of the C-3 phosphate and the C-6 proR hydrogen from 5-enolpyruvylshikimate-3-phosphate (EPSP) to yield chorismate, which is the branch point compound that serves as the starting substrate for the three terminal pathways of aromatic amino acid biosynthesis. This reaction introduces a second double bond into the aromatic ring system. In Hydrogenovibrio crunogenus (strain DSM 25203 / XCL-2) (Thiomicrospira crunogena), this protein is Chorismate synthase.